A 158-amino-acid chain; its full sequence is NADPH-dependent 7-cyano-7-deazaguanine reductase (158 aa).

A compositionally biased stretch (polar residues) spans 1–13; the sequence is MAKRSNTTMTSAG. Residues 1–37 are disordered; it reads MAKRSNTTMTSAGLQLGREVAPPDSPETAKLDRVPNP. Basic and acidic residues predominate over residues 27–37; sequence ETAKLDRVPNP. Cys-56 acts as the Thioimide intermediate in catalysis. Asp-63 functions as the Proton donor in the catalytic mechanism. Residues 78–80 and 97–98 contribute to the substrate site; these read VES and HE.

It belongs to the GTP cyclohydrolase I family. QueF type 1 subfamily.

It localises to the cytoplasm. It catalyses the reaction 7-aminomethyl-7-carbaguanine + 2 NADP(+) = 7-cyano-7-deazaguanine + 2 NADPH + 3 H(+). The protein operates within tRNA modification; tRNA-queuosine biosynthesis. Functionally, catalyzes the NADPH-dependent reduction of 7-cyano-7-deazaguanine (preQ0) to 7-aminomethyl-7-deazaguanine (preQ1). The polypeptide is NADPH-dependent 7-cyano-7-deazaguanine reductase (Bradyrhizobium sp. (strain ORS 278)).